Here is a 194-residue protein sequence, read N- to C-terminus: dCTP deaminase (194 aa).

Residues 110–115 (RSSLAR), Asp-128, 136–138 (VLE), Tyr-171, Lys-178, and Gln-182 contribute to the dCTP site. Catalysis depends on Glu-138, which acts as the Proton donor/acceptor. The tract at residues 174–194 (RKSSKYKDQQEAVASRISQDK) is disordered.

It belongs to the dCTP deaminase family. In terms of assembly, homotrimer.

It carries out the reaction dCTP + H2O + H(+) = dUTP + NH4(+). It functions in the pathway pyrimidine metabolism; dUMP biosynthesis; dUMP from dCTP (dUTP route): step 1/2. Functionally, catalyzes the deamination of dCTP to dUTP. This is dCTP deaminase from Shewanella frigidimarina (strain NCIMB 400).